The primary structure comprises 615 residues: DNA mismatch repair protein MutL (615 aa).

Low complexity predominate over residues 378 to 391; it reads PAPASGSRPAAPWP. Residues 378–397 form a disordered region; it reads PAPASGSRPAAPWPNAQPGY.

It belongs to the DNA mismatch repair MutL/HexB family.

Functionally, this protein is involved in the repair of mismatches in DNA. It is required for dam-dependent methyl-directed DNA mismatch repair. May act as a 'molecular matchmaker', a protein that promotes the formation of a stable complex between two or more DNA-binding proteins in an ATP-dependent manner without itself being part of a final effector complex. In Escherichia coli O127:H6 (strain E2348/69 / EPEC), this protein is DNA mismatch repair protein MutL.